Reading from the N-terminus, the 365-residue chain is MNENHYLLLTPGPLTTTKSVKEVMLYDWCTWDDEYNTMVQEVRAKLVSLATKEEEKYTTVLMQGSGTFSVEAVIGSVIPANGKLLVCTNGAYGKRIVQMAEMLQIDVVISQTEEWEPTNIVEVEKLLQEDKEITHIAVVHCETTTGIINPIVDVCKLGQQYGKVTIVDAMSSFGGIEIDIADLQIDFLISSANKCIQGVPGFGFVIAKRDELLKCKGQGRSLSLDLYDQWETMEKQNGKWRFTSPTHVVHAFYQALLELEKEGGVRARYNRYYNNQKLLVNRMGEIGFKPLVDKKYQSPIITSFIYPKEGFEFQQLYNELKRYGFVIYPGKISKVDTFRIGNIGDVHEEDINRLVDCIAKGAVIG.

At K194 the chain carries N6-(pyridoxal phosphate)lysine.

The protein belongs to the class-V pyridoxal-phosphate-dependent aminotransferase family. PhnW subfamily. In terms of assembly, homodimer. The cofactor is pyridoxal 5'-phosphate.

The catalysed reaction is (2-aminoethyl)phosphonate + pyruvate = phosphonoacetaldehyde + L-alanine. Functionally, involved in phosphonate degradation. The sequence is that of 2-aminoethylphosphonate--pyruvate transaminase from Bacillus cereus (strain ATCC 14579 / DSM 31 / CCUG 7414 / JCM 2152 / NBRC 15305 / NCIMB 9373 / NCTC 2599 / NRRL B-3711).